The primary structure comprises 207 residues: Ribosomal RNA small subunit methyltransferase G (207 aa).

Residues Gly76, Gln81, 127–128 (VE), and Arg141 contribute to the S-adenosyl-L-methionine site.

It belongs to the methyltransferase superfamily. RNA methyltransferase RsmG family.

The protein localises to the cytoplasm. It carries out the reaction guanosine(527) in 16S rRNA + S-adenosyl-L-methionine = N(7)-methylguanosine(527) in 16S rRNA + S-adenosyl-L-homocysteine. In terms of biological role, specifically methylates the N7 position of guanine in position 527 of 16S rRNA. This chain is Ribosomal RNA small subunit methyltransferase G, found in Neisseria meningitidis serogroup C (strain 053442).